A 291-amino-acid polypeptide reads, in one-letter code: 4-diphosphocytidyl-2-C-methyl-D-erythritol kinase (291 aa).

K10 is an active-site residue. Residue 99 to 109 coordinates ATP; that stretch reads PMGGGLGGGSS. Residue D141 is part of the active site.

It belongs to the GHMP kinase family. IspE subfamily. As to quaternary structure, homodimer.

The enzyme catalyses 4-CDP-2-C-methyl-D-erythritol + ATP = 4-CDP-2-C-methyl-D-erythritol 2-phosphate + ADP + H(+). Its pathway is isoprenoid biosynthesis; isopentenyl diphosphate biosynthesis via DXP pathway; isopentenyl diphosphate from 1-deoxy-D-xylulose 5-phosphate: step 3/6. In terms of biological role, catalyzes the phosphorylation of the position 2 hydroxy group of 4-diphosphocytidyl-2C-methyl-D-erythritol. The protein is 4-diphosphocytidyl-2-C-methyl-D-erythritol kinase of Proteus mirabilis (strain HI4320).